The sequence spans 291 residues: 4-hydroxy-tetrahydrodipicolinate synthase (291 aa).

Thr45 is a binding site for pyruvate. The active-site Proton donor/acceptor is Tyr133. The active-site Schiff-base intermediate with substrate is Lys161. Ile203 provides a ligand contact to pyruvate.

The protein belongs to the DapA family. Homotetramer.

It is found in the cytoplasm. It catalyses the reaction L-aspartate 4-semialdehyde + pyruvate = (2S,4S)-4-hydroxy-2,3,4,5-tetrahydrodipicolinate + H2O + H(+). It participates in amino-acid biosynthesis; L-lysine biosynthesis via DAP pathway; (S)-tetrahydrodipicolinate from L-aspartate: step 3/4. With respect to regulation, is allosterically feedback inhibited by lysine; the N.meningitidis enzyme is significantly more sensitive to lysine than the E.coli enzyme. Shows substrate inhibition by (S)-ASA, with a Ki of 1.7 mM. Functionally, catalyzes the condensation of (S)-aspartate-beta-semialdehyde [(S)-ASA] and pyruvate to 4-hydroxy-tetrahydrodipicolinate (HTPA). The chain is 4-hydroxy-tetrahydrodipicolinate synthase from Neisseria meningitidis serogroup B (strain ATCC BAA-335 / MC58).